Reading from the N-terminus, the 115-residue chain is Ribonuclease P protein component (115 aa).

The protein belongs to the RnpA family. Consists of a catalytic RNA component (M1 or rnpB) and a protein subunit.

The enzyme catalyses Endonucleolytic cleavage of RNA, removing 5'-extranucleotides from tRNA precursor.. In terms of biological role, RNaseP catalyzes the removal of the 5'-leader sequence from pre-tRNA to produce the mature 5'-terminus. It can also cleave other RNA substrates such as 4.5S RNA. The protein component plays an auxiliary but essential role in vivo by binding to the 5'-leader sequence and broadening the substrate specificity of the ribozyme. In Staphylococcus aureus (strain Mu3 / ATCC 700698), this protein is Ribonuclease P protein component.